Consider the following 269-residue polypeptide: Bifunctional protein FolD (269 aa).

NADP(+) is bound by residues 149 to 151 (GLG) and valine 215.

It belongs to the tetrahydrofolate dehydrogenase/cyclohydrolase family. Homodimer.

The enzyme catalyses (6R)-5,10-methylene-5,6,7,8-tetrahydrofolate + NADP(+) = (6R)-5,10-methenyltetrahydrofolate + NADPH. It carries out the reaction (6R)-5,10-methenyltetrahydrofolate + H2O = (6R)-10-formyltetrahydrofolate + H(+). It participates in one-carbon metabolism; tetrahydrofolate interconversion. Functionally, catalyzes the oxidation of 5,10-methylenetetrahydrofolate to 5,10-methenyltetrahydrofolate and then the hydrolysis of 5,10-methenyltetrahydrofolate to 10-formyltetrahydrofolate. The protein is Bifunctional protein FolD of Mycoplasma pneumoniae (strain ATCC 29342 / M129 / Subtype 1) (Mycoplasmoides pneumoniae).